We begin with the raw amino-acid sequence, 190 residues long: Vascular endothelial growth factor A (190 aa).

Residues 1-26 (MNFLLSWVHWTLALLLYLHHAKWSQA) form the signal peptide. Cystine bridges form between cysteine 51/cysteine 93, cysteine 82/cysteine 127, and cysteine 86/cysteine 129. Asparagine 100 carries an N-linked (GlcNAc...) asparagine glycan.

This sequence belongs to the PDGF/VEGF growth factor family. As to quaternary structure, homodimer; disulfide-linked. Also found as heterodimer with PGF. Interacts with NRP1. Interacts with isoform 2 of BSG. Interacts with CD82; this interaction inhibits VEGFA-mediated signaling pathway.

The protein localises to the secreted. Growth factor active in angiogenesis, vasculogenesis and endothelial cell growth. Induces endothelial cell proliferation, promotes cell migration, inhibits apoptosis and induces permeabilization of blood vessels. Binds to the FLT1/VEGFR1 and KDR/VEGFR2 receptors, heparan sulfate and heparin. Binding to NRP1 receptor initiates a signaling pathway needed for motor neuron axon guidance and cell body migration, including for the caudal migration of facial motor neurons from rhombomere 4 to rhombomere 6 during embryonic development. Also binds the DEAR/FBXW7-AS1 receptor. In Mesocricetus auratus (Golden hamster), this protein is Vascular endothelial growth factor A (VEGFA).